A 253-amino-acid chain; its full sequence is MNRVILFHFHFFKNAGSAVDYILEKNFGDRFVKKEFKLWPYYENIKEVIKWIENESDAVAFSSHTARLFDSTLLERRGIKIIPIIFVRHPIIRIHSAYHYERKQVDIFRPGPVIARNTDFKGYVEIRLAIPRQEFNVSNFHVFRLADMLHGEKNMKPLEKALIALKRLPFIGLVEEFEKSMTKLEETVREYFPEFKASVIRTNVQFSPDMPLEERLKIIKNEVGKDFYKKLMEINEEDMVLWEKVVDMYKEGF.

The N-terminal stretch at 1-15 (MNRVILFHFHFFKNA) is a signal peptide.

This is an uncharacterized protein from Archaeoglobus fulgidus (strain ATCC 49558 / DSM 4304 / JCM 9628 / NBRC 100126 / VC-16).